The chain runs to 324 residues: Quinolinate synthase (324 aa).

His44 and Ser62 together coordinate iminosuccinate. Cys107 is a [4Fe-4S] cluster binding site. Iminosuccinate contacts are provided by residues 133–135 (YVN) and Ser150. Residue Cys192 participates in [4Fe-4S] cluster binding. Iminosuccinate is bound by residues 218–220 (HPE) and Thr235. A [4Fe-4S] cluster-binding site is contributed by Cys278.

The protein belongs to the quinolinate synthase family. Type 2 subfamily. [4Fe-4S] cluster is required as a cofactor.

It is found in the cytoplasm. It carries out the reaction iminosuccinate + dihydroxyacetone phosphate = quinolinate + phosphate + 2 H2O + H(+). It participates in cofactor biosynthesis; NAD(+) biosynthesis; quinolinate from iminoaspartate: step 1/1. Its function is as follows. Catalyzes the condensation of iminoaspartate with dihydroxyacetone phosphate to form quinolinate. This Leptospira interrogans serogroup Icterohaemorrhagiae serovar copenhageni (strain Fiocruz L1-130) protein is Quinolinate synthase.